We begin with the raw amino-acid sequence, 217 residues long: MNLVLMGLPGAGKGTQGERIVEDYGIPHISTGDMFRAAMKEETPLGLEAKSYIDKGELVPDEVTIGIVKERLGKDDCERGFLLDGFPRTVAQAEALENILEEYGKPIDYVINIKVDKDSLMERLTGRRICSVCGTTYHLVFNPPKTPGVCDKDGGDLYQRADDNEETVSKRLEVNMKQTQPLLDFYSEKGYLVNVNGQQDINDVYKDVKELLGGLSK.

An ATP-binding site is contributed by 10–15; sequence GAGKGT. An NMP region spans residues 30–59; sequence STGDMFRAAMKEETPLGLEAKSYIDKGELV. Residues Thr-31, Arg-36, 57–59, 85–88, and Gln-92 each bind AMP; these read ELV and GFPR. An LID region spans residues 126-163; the sequence is GRRICSVCGTTYHLVFNPPKTPGVCDKDGGDLYQRADD. Arg-127 serves as a coordination point for ATP. Cys-130 and Cys-133 together coordinate Zn(2+). Residue 136-137 coordinates ATP; that stretch reads TY. Zn(2+) is bound by residues Cys-150 and Asp-153. AMP-binding residues include Arg-160 and Arg-171. An ATP-binding site is contributed by Gln-199.

This sequence belongs to the adenylate kinase family. Monomer.

It is found in the cytoplasm. The catalysed reaction is AMP + ATP = 2 ADP. Its pathway is purine metabolism; AMP biosynthesis via salvage pathway; AMP from ADP: step 1/1. In terms of biological role, catalyzes the reversible transfer of the terminal phosphate group between ATP and AMP. Plays an important role in cellular energy homeostasis and in adenine nucleotide metabolism. In Bacillus velezensis (strain DSM 23117 / BGSC 10A6 / LMG 26770 / FZB42) (Bacillus amyloliquefaciens subsp. plantarum), this protein is Adenylate kinase.